Consider the following 445-residue polypeptide: MEVTQTKAEGLSRTFAVKVPVSELQAKLDARIEEIRPQMRLKGFRPGKVPAAHVRKMYGRDLMGEVIDKLVNETNQKALEENSLRPAGTPNVDMQADIEKVVTGKEDLSYQMHVDVMPEFTPVDVSTLTIVRPVAEIADEQIDEALKRIADQNMKYEPRAEGEASQDGDAVIVDFVGKIDGEAFEGGTAEQQSVVLGANRFIPGFEEQLLGVKAGEEKELNVSFPEDYPAANLAGKAAVFETKIHEVRAPQTPEMDDEFAKGLGLESLEQLRGLVKDQLANEHTTASRSKAKRDLLDKLDAAHDFDLPPGMVDQEFEQIWQQLQREMDAGRVSDEEKAKPEETLRDEYRKIAERRVRLGLVLAEVGRIADVRISEAEVNQALIREARQYPGQEREVVQFFQKNPNAMAQLRAPIYEDKVVDHILETAKVEEKTVTREELFAEDEE.

The region spanning 168 to 253 (GDAVIVDFVG…IHEVRAPQTP (86 aa)) is the PPIase FKBP-type domain.

It belongs to the FKBP-type PPIase family. Tig subfamily.

The protein localises to the cytoplasm. It catalyses the reaction [protein]-peptidylproline (omega=180) = [protein]-peptidylproline (omega=0). Its function is as follows. Involved in protein export. Acts as a chaperone by maintaining the newly synthesized protein in an open conformation. Functions as a peptidyl-prolyl cis-trans isomerase. The protein is Trigger factor of Hyphomonas neptunium (strain ATCC 15444).